Reading from the N-terminus, the 202-residue chain is Transmembrane protein 223 (202 aa).

Residues 1–43 (MAAPWRRWPTGLLAVLRPLLTCRPLQGTTLQRDVLLFEHDRGR) are Mitochondrial matrix-facing. Residues 44–64 (FFTILGLFCAGQGVFWASMAV) form a helical membrane-spanning segment. The Mitochondrial intermembrane portion of the chain corresponds to 65–97 (AAVSRPPVPVQPLDAEVPNRGPFDLRSALWRYG). The helical transmembrane segment at 98 to 118 (LAVGCGAIGALVLGAGLLFSL) threads the bilayer. Residues 119–202 (RSVRSVVLRA…DNTVGAYRSL (84 aa)) lie on the Mitochondrial matrix side of the membrane.

Belongs to the TMEM223 family. As to quaternary structure, associates with the mitochondrial ribosome.

It localises to the mitochondrion inner membrane. Functionally, mitochondrial ribosome-associated protein involved in the first steps of cytochrome c oxidase complex (complex IV) biogenesis. Stimulates the translation of MT-CO1 mRNA and is a constituent of early MT-CO1 assembly intermediates. This Homo sapiens (Human) protein is Transmembrane protein 223.